A 1050-amino-acid polypeptide reads, in one-letter code: Nuclear pore complex-interacting protein family member B3 (1050 aa).

A helical membrane pass occupies residues 63 to 87 (VIIAFPTSYKVVITLWIVYLWVSLL). 3 disordered regions span residues 241 to 262 (NRMG…NSLS), 290 to 574 (LTPL…NIKT), and 785 to 1050 (ERLR…RRLS). The segment covering 252–262 (QQHSITDNSLS) has biased composition (polar residues). A compositionally biased stretch (pro residues) spans 349–359 (PLPPSALPSAP). Composition is skewed to basic and acidic residues over residues 406–416 (DNIKTPAERLR), 448–458 (DNIKTPAERLR), 490–500 (DNIKTPAERLR), 528–538 (DNIKTPAERLR), 820–830 (DNIKTPAERLR), 862–872 (DNIKTPAERLR), and 904–914 (DNIKTPAERLR).

Belongs to the NPIP family.

Its subcellular location is the membrane. This is Nuclear pore complex-interacting protein family member B3 (NPIPB3) from Homo sapiens (Human).